The sequence spans 311 residues: Mycinamicin-resistance protein MyrB (311 aa).

The S-adenosyl-L-methionine site is built by N27, L29, G54, E75, and D98. Positions P272–A311 are disordered. Low complexity predominate over residues P293 to P302.

It belongs to the class I-like SAM-binding methyltransferase superfamily. rRNA adenine N(6)-methyltransferase family.

Its function is as follows. Confers resistance to macrolide, lincosamide and streptogramin B antibiotics. The sequence is that of Mycinamicin-resistance protein MyrB (myrB) from Micromonospora griseorubida.